The chain runs to 287 residues: Probable aquaporin PIP1-5 (287 aa).

Met-1 bears the N-acetylmethionine mark. Residues 1 to 34 (MEGKEEDVNVGANKFPERQPIGTAAQTESKDYKE) are disordered. At 1-55 (MEGKEEDVNVGANKFPERQPIGTAAQTESKDYKEPPPAPFFEPGELKSWSFYRAG) the chain is on the cytoplasmic side. A helical membrane pass occupies residues 56 to 76 (IAEFIATFLFLYVTVLTVMGV). Topologically, residues 77 to 92 (KRAPNMCASVGIQGIA) are extracellular. A helical membrane pass occupies residues 93–113 (WAFGGMIFALVYCTAGISGGH). The Cytoplasmic portion of the chain corresponds to 114 to 133 (INPAVTFGLFLARKLSLTRA). The NPA 1 motif lies at 115-117 (NPA). A helical transmembrane segment spans residues 134-154 (LFYIVMQCLGAICGAGVVKGF). Residues 155–175 (QPGLYQTNGGGANVVAHGYTK) are Extracellular-facing. Residues 176 to 196 (GSGLGAEIVGTFVLVYTVFSA) traverse the membrane as a helical segment. Over 197–209 (TDAKRSARDSHVP) the chain is Cytoplasmic. A helical transmembrane segment spans residues 210–230 (ILAPLPIGFAVFLVHLATIPI). Topologically, residues 231–257 (TGTGINPARSLGAAIIYNKDHAWDDHW) are extracellular. The NPA 2 signature appears at 236-238 (NPA). A helical membrane pass occupies residues 258-278 (IFWVGPFIGAALAALYHQIVI). The Cytoplasmic portion of the chain corresponds to 279 to 287 (RAIPFKSKT). At Ser-285 the chain carries Phosphoserine.

This sequence belongs to the MIP/aquaporin (TC 1.A.8) family. PIP (TC 1.A.8.11) subfamily. As to expression, predominantly expressed in green siliques. Also expressed above ground, in roots and flower buds.

The protein localises to the cell membrane. Its function is as follows. Aquaporins facilitate the transport of water and small neutral solutes across cell membranes. The polypeptide is Probable aquaporin PIP1-5 (PIP1-5) (Arabidopsis thaliana (Mouse-ear cress)).